Here is a 346-residue protein sequence, read N- to C-terminus: S-adenosylmethionine:tRNA ribosyltransferase-isomerase (346 aa).

Belongs to the QueA family. Monomer.

It localises to the cytoplasm. The catalysed reaction is 7-aminomethyl-7-carbaguanosine(34) in tRNA + S-adenosyl-L-methionine = epoxyqueuosine(34) in tRNA + adenine + L-methionine + 2 H(+). It functions in the pathway tRNA modification; tRNA-queuosine biosynthesis. In terms of biological role, transfers and isomerizes the ribose moiety from AdoMet to the 7-aminomethyl group of 7-deazaguanine (preQ1-tRNA) to give epoxyqueuosine (oQ-tRNA). The chain is S-adenosylmethionine:tRNA ribosyltransferase-isomerase from Neisseria gonorrhoeae (strain ATCC 700825 / FA 1090).